Consider the following 332-residue polypeptide: Holliday junction branch migration complex subunit RuvB (332 aa).

The tract at residues 1 to 181 (MARILDNDVM…FGITGHMEYY (181 aa)) is large ATPase domain (RuvB-L). ATP-binding positions include Leu-20, Arg-21, Gly-62, Lys-65, Thr-66, Thr-67, 128-130 (EDF), Arg-171, Tyr-181, and Arg-218. A Mg(2+)-binding site is contributed by Thr-66. The interval 182 to 252 (QEKDLTEIVE…ITDRALTMLD (71 aa)) is small ATPAse domain (RuvB-S). Residues 255–332 (REGLDYIDQK…RHLGYPYQNT (78 aa)) are head domain (RuvB-H). DNA-binding residues include Arg-291, Arg-310, Arg-312, and Arg-315.

The protein belongs to the RuvB family. As to quaternary structure, homohexamer. Forms an RuvA(8)-RuvB(12)-Holliday junction (HJ) complex. HJ DNA is sandwiched between 2 RuvA tetramers; dsDNA enters through RuvA and exits via RuvB. An RuvB hexamer assembles on each DNA strand where it exits the tetramer. Each RuvB hexamer is contacted by two RuvA subunits (via domain III) on 2 adjacent RuvB subunits; this complex drives branch migration. In the full resolvosome a probable DNA-RuvA(4)-RuvB(12)-RuvC(2) complex forms which resolves the HJ.

It is found in the cytoplasm. The enzyme catalyses ATP + H2O = ADP + phosphate + H(+). Its function is as follows. The RuvA-RuvB-RuvC complex processes Holliday junction (HJ) DNA during genetic recombination and DNA repair, while the RuvA-RuvB complex plays an important role in the rescue of blocked DNA replication forks via replication fork reversal (RFR). RuvA specifically binds to HJ cruciform DNA, conferring on it an open structure. The RuvB hexamer acts as an ATP-dependent pump, pulling dsDNA into and through the RuvAB complex. RuvB forms 2 homohexamers on either side of HJ DNA bound by 1 or 2 RuvA tetramers; 4 subunits per hexamer contact DNA at a time. Coordinated motions by a converter formed by DNA-disengaged RuvB subunits stimulates ATP hydrolysis and nucleotide exchange. Immobilization of the converter enables RuvB to convert the ATP-contained energy into a lever motion, pulling 2 nucleotides of DNA out of the RuvA tetramer per ATP hydrolyzed, thus driving DNA branch migration. The RuvB motors rotate together with the DNA substrate, which together with the progressing nucleotide cycle form the mechanistic basis for DNA recombination by continuous HJ branch migration. Branch migration allows RuvC to scan DNA until it finds its consensus sequence, where it cleaves and resolves cruciform DNA. The sequence is that of Holliday junction branch migration complex subunit RuvB from Streptococcus pyogenes serotype M12 (strain MGAS9429).